The primary structure comprises 438 residues: Nudix hydrolase 19, chloroplastic (438 aa).

The N-terminal 36 residues, 1–36, are a transit peptide targeting the chloroplast; the sequence is MLALFLSSSSYPTLSFLSRSVTLNLARTTTLSALTM. Residues Cys-212, Cys-215, Cys-230, and Cys-235 each contribute to the Zn(2+) site. Substrate-binding positions include Tyr-240, 276–278, Glu-292, Glu-296, and Glu-342; that span reads AGF. Residues 241 to 371 enclose the Nudix hydrolase domain; the sequence is PRVDPVVIML…EYRKAQRTAA (131 aa). Mg(2+) contacts are provided by Ala-276, Glu-292, Glu-296, and Glu-342. The Nudix box motif lies at 277-298; that stretch reads GFIEPGESLEEAVRRETWEETG. A Microbody targeting signal motif is present at residues 422–424; sequence PDD.

It belongs to the Nudix hydrolase family. NudC subfamily. It depends on Mg(2+) as a cofactor. The cofactor is Zn(2+). As to expression, expressed in roots, leaves, stems and inflorescences.

It is found in the plastid. Its subcellular location is the chloroplast. It carries out the reaction a 5'-end NAD(+)-phospho-ribonucleoside in mRNA + H2O = a 5'-end phospho-adenosine-phospho-ribonucleoside in mRNA + beta-nicotinamide D-ribonucleotide + 2 H(+). The enzyme catalyses NAD(+) + H2O = beta-nicotinamide D-ribonucleotide + AMP + 2 H(+). It catalyses the reaction NADH + H2O = reduced beta-nicotinamide D-ribonucleotide + AMP + 2 H(+). Its function is as follows. mRNA decapping enzyme that specifically removes the nicotinamide adenine dinucleotide (NAD) cap from a subset of mRNAs by hydrolyzing the diphosphate linkage to produce nicotinamide mononucleotide (NMN) and 5' monophosphate mRNA. The NAD-cap is present at the 5'-end of some RNAs; in contrast to the canonical N7 methylguanosine (m7G) cap, the NAD cap promotes mRNA decay. Mediates the hydrolysis of some nucleoside diphosphate derivatives. Has a high affinity for NADPH compared with that for NADH. The polypeptide is Nudix hydrolase 19, chloroplastic (NUDT19) (Arabidopsis thaliana (Mouse-ear cress)).